Consider the following 128-residue polypeptide: Small ribosomal subunit protein uS11 (128 aa).

Belongs to the universal ribosomal protein uS11 family. Part of the 30S ribosomal subunit. Interacts with proteins S7 and S18. Binds to IF-3.

Functionally, located on the platform of the 30S subunit, it bridges several disparate RNA helices of the 16S rRNA. Forms part of the Shine-Dalgarno cleft in the 70S ribosome. In Wolbachia pipientis subsp. Culex pipiens (strain wPip), this protein is Small ribosomal subunit protein uS11.